The primary structure comprises 341 residues: NADH-quinone oxidoreductase subunit H (341 aa).

8 helical membrane passes run 38–58, 70–90, 115–135, 161–181, 187–207, 239–259, 275–295, and 314–334; these read PSVV…KLLV, ILFI…WAVI, IGVL…IVAG, MGLI…GEMV, MPFW…ISLL, LFFL…TIFF, IPGL…FVWT, and VFLP…LFTG.

Belongs to the complex I subunit 1 family. NDH-1 is composed of 14 different subunits. Subunits NuoA, H, J, K, L, M, N constitute the membrane sector of the complex.

The protein localises to the cell membrane. The catalysed reaction is a quinone + NADH + 5 H(+)(in) = a quinol + NAD(+) + 4 H(+)(out). Its function is as follows. NDH-1 shuttles electrons from NADH, via FMN and iron-sulfur (Fe-S) centers, to quinones in the respiratory chain. The immediate electron acceptor for the enzyme in this species is believed to be ubiquinone. Couples the redox reaction to proton translocation (for every two electrons transferred, four hydrogen ions are translocated across the cytoplasmic membrane), and thus conserves the redox energy in a proton gradient. This subunit may bind ubiquinone. In Wolbachia sp. subsp. Brugia malayi (strain TRS), this protein is NADH-quinone oxidoreductase subunit H.